Here is a 334-residue protein sequence, read N- to C-terminus: Holliday junction branch migration complex subunit RuvB (334 aa).

A large ATPase domain (RuvB-L) region spans residues 4-184; that stretch reads ADRLIQPQDL…FGIPLRLEFY (181 aa). Residues arginine 24, glycine 65, lysine 68, threonine 69, threonine 70, 131-133, arginine 174, tyrosine 184, and arginine 221 each bind ATP; that span reads EDY. Threonine 69 is a Mg(2+) binding site. Residues 185-255 are small ATPAse domain (RuvB-S); it reads NVRDLSSIVA…VAQSALDLLD (71 aa). The head domain (RuvB-H) stretch occupies residues 258–334; that stretch reads SEGFDYMDRK…YSHFDLIKPD (77 aa). Residues arginine 294, arginine 313, and arginine 318 each coordinate DNA.

It belongs to the RuvB family. Homohexamer. Forms an RuvA(8)-RuvB(12)-Holliday junction (HJ) complex. HJ DNA is sandwiched between 2 RuvA tetramers; dsDNA enters through RuvA and exits via RuvB. An RuvB hexamer assembles on each DNA strand where it exits the tetramer. Each RuvB hexamer is contacted by two RuvA subunits (via domain III) on 2 adjacent RuvB subunits; this complex drives branch migration. In the full resolvosome a probable DNA-RuvA(4)-RuvB(12)-RuvC(2) complex forms which resolves the HJ.

It localises to the cytoplasm. It catalyses the reaction ATP + H2O = ADP + phosphate + H(+). The RuvA-RuvB-RuvC complex processes Holliday junction (HJ) DNA during genetic recombination and DNA repair, while the RuvA-RuvB complex plays an important role in the rescue of blocked DNA replication forks via replication fork reversal (RFR). RuvA specifically binds to HJ cruciform DNA, conferring on it an open structure. The RuvB hexamer acts as an ATP-dependent pump, pulling dsDNA into and through the RuvAB complex. RuvB forms 2 homohexamers on either side of HJ DNA bound by 1 or 2 RuvA tetramers; 4 subunits per hexamer contact DNA at a time. Coordinated motions by a converter formed by DNA-disengaged RuvB subunits stimulates ATP hydrolysis and nucleotide exchange. Immobilization of the converter enables RuvB to convert the ATP-contained energy into a lever motion, pulling 2 nucleotides of DNA out of the RuvA tetramer per ATP hydrolyzed, thus driving DNA branch migration. The RuvB motors rotate together with the DNA substrate, which together with the progressing nucleotide cycle form the mechanistic basis for DNA recombination by continuous HJ branch migration. Branch migration allows RuvC to scan DNA until it finds its consensus sequence, where it cleaves and resolves cruciform DNA. In Shewanella amazonensis (strain ATCC BAA-1098 / SB2B), this protein is Holliday junction branch migration complex subunit RuvB.